The primary structure comprises 370 residues: Peptide chain release factor 1 (370 aa).

N5-methylglutamine is present on Gln239.

It belongs to the prokaryotic/mitochondrial release factor family. In terms of processing, methylated by PrmC. Methylation increases the termination efficiency of RF1.

The protein localises to the cytoplasm. Peptide chain release factor 1 directs the termination of translation in response to the peptide chain termination codons UAG and UAA. This chain is Peptide chain release factor 1, found in Bacteroides thetaiotaomicron (strain ATCC 29148 / DSM 2079 / JCM 5827 / CCUG 10774 / NCTC 10582 / VPI-5482 / E50).